The primary structure comprises 254 residues: Small ribosomal subunit protein uS3 (254 aa).

The region spanning 38 to 106 is the KH type-2 domain; it reads IRKYVLARIP…DVQINIFEIK (69 aa). Residues 215–238 are compositionally biased toward low complexity; that stretch reads NVGNAASGASSSSNNDNASPNQGG. A disordered region spans residues 215 to 254; it reads NVGNAASGASSSSNNDNASPNQGGPRRKRGGEGNRKKSNK. Basic and acidic residues predominate over residues 244–254; the sequence is GGEGNRKKSNK.

This sequence belongs to the universal ribosomal protein uS3 family. Part of the 30S ribosomal subunit. Forms a tight complex with proteins S10 and S14.

Binds the lower part of the 30S subunit head. Binds mRNA in the 70S ribosome, positioning it for translation. The polypeptide is Small ribosomal subunit protein uS3 (Cytophaga hutchinsonii (strain ATCC 33406 / DSM 1761 / CIP 103989 / NBRC 15051 / NCIMB 9469 / D465)).